We begin with the raw amino-acid sequence, 108 residues long: Cytochrome bo(3) ubiquinol oxidase subunit 4 (108 aa).

The Cytoplasmic portion of the chain corresponds to 1–16 (MNKYKKIKNNFDKEKK). The helical transmembrane segment at 17–37 (SYIVGFLFSLFLTIIPFFCTL) threads the bilayer. The Extracellular segment spans residues 38–46 (NHLFSRKIN). The helical transmembrane segment at 47-67 (FFVILLCALSQIIIHFIYFLH) threads the bilayer. At 68–77 (LDFSKKNSWN) the chain is on the cytoplasmic side. The chain crosses the membrane as a helical span at residues 78–98 (IISLLFILIIVFIIVFGSIWI). Topologically, residues 99 to 108 (MYNLNHHVIL) are extracellular.

Belongs to the cytochrome c oxidase bacterial subunit 4 family. As to quaternary structure, heterooctamer of two A chains, two B chains, two C chains and two D chains.

Its subcellular location is the cell membrane. Cytochrome bo(3) ubiquinol terminal oxidase is the component of the aerobic respiratory chain of E.coli that predominates when cells are grown at high aeration. Has proton pump activity across the membrane in addition to electron transfer, pumping 2 protons/electron. The sequence is that of Cytochrome bo(3) ubiquinol oxidase subunit 4 (cyoD) from Buchnera aphidicola subsp. Schizaphis graminum (strain Sg).